The sequence spans 321 residues: Sphingolipid delta(4)-desaturase DES1 (321 aa).

6 helical membrane passes run 41 to 61 (PNFK…LFVV), 68 to 88 (WLIV…MLAV), 107 to 127 (ILGF…FKKY), 157 to 177 (FGKF…PLII), 187 to 206 (IINT…FLGW), and 208 to 230 (PLAY…GHFI).

The protein belongs to the fatty acid desaturase type 1 family. DEGS subfamily. As to expression, testes.

The protein resides in the endoplasmic reticulum membrane. It is found in the membrane. The protein localises to the mitochondrion. It carries out the reaction an N-acylsphinganine + 2 Fe(II)-[cytochrome b5] + O2 + 2 H(+) = an N-acylsphing-4-enine + 2 Fe(III)-[cytochrome b5] + 2 H2O. The enzyme catalyses an N-acyleicosasphinganine + 2 Fe(II)-[cytochrome b5] + O2 + 2 H(+) = an N-acyleicosasphing-4-enine + 2 Fe(III)-[cytochrome b5] + 2 H2O. It participates in sphingolipid metabolism. Functionally, has sphingolipid-delta-4-desaturase activity. Converts sphinganine-containing sphingolipids (such as N-acylsphinganines or dihydroceramides) into sphingolipids containing the delta-4-desaturated sphingoid base (E)-sphing-4-enine (such as N-acylsphing-4-enines or ceramides), which are required for many different functions (structural functions as well as signaling). Required to initiate spermatid differentiation among other signals. Required for central spindle assembly and cytokinesis during male meiosis, may act as part of an anchoring mechanism that links membrane-bounded cellular compartments to components of the cytoskeleton. The protein is Sphingolipid delta(4)-desaturase DES1 of Drosophila melanogaster (Fruit fly).